Reading from the N-terminus, the 440-residue chain is Chromosomal replication initiator protein DnaA (440 aa).

The domain I, interacts with DnaA modulators stretch occupies residues 1–74 (MNPSQILENL…VQSGNKAIIN (74 aa)). Residues 74–99 (NIQAQSAKQSNKSTKIDIAHIKAQST) are domain II. The tract at residues 100 to 316 (ILNPSFTFDS…GIIISLNAYA (217 aa)) is domain III, AAA+ region. ATP is bound by residues G146, G148, K149, and T150. Residues 317–440 (TILGQEITLE…KNKILVKSQS (124 aa)) are domain IV, binds dsDNA.

Belongs to the DnaA family. In terms of assembly, oligomerizes as a right-handed, spiral filament on DNA at oriC.

The protein resides in the cytoplasm. In terms of biological role, plays an essential role in the initiation and regulation of chromosomal replication. ATP-DnaA binds to the origin of replication (oriC) to initiate formation of the DNA replication initiation complex once per cell cycle. Binds the DnaA box (a 9 base pair repeat at the origin) and separates the double-stranded (ds)DNA. Forms a right-handed helical filament on oriC DNA; dsDNA binds to the exterior of the filament while single-stranded (ss)DNA is stabiized in the filament's interior. The ATP-DnaA-oriC complex binds and stabilizes one strand of the AT-rich DNA unwinding element (DUE), permitting loading of DNA polymerase. After initiation quickly degrades to an ADP-DnaA complex that is not apt for DNA replication. Binds acidic phospholipids. This Campylobacter jejuni (strain RM1221) protein is Chromosomal replication initiator protein DnaA.